The chain runs to 716 residues: Probable basic-leucine zipper transcription factor O (716 aa).

Positions 20 to 142 form a coiled coil; the sequence is LLDDFSQLQQ…YQQRQQQYQD (123 aa). The interval 173–233 is disordered; it reads SINYNMNNNN…NNKTTDNINN (61 aa). The 64-residue stretch at 381-444 folds into the bZIP domain; sequence KSTESIKKMN…SVDLMKPSND (64 aa). A basic motif region spans residues 387 to 403; it reads KKMNQNKASRNYRQKKK. The tract at residues 406 to 413 is leucine-zipper; sequence IKEIEDKL.

It belongs to the bZIP family.

The protein resides in the nucleus. Its function is as follows. Probable transcriptional regulator. This chain is Probable basic-leucine zipper transcription factor O (bzpO), found in Dictyostelium discoideum (Social amoeba).